The following is a 250-amino-acid chain: Acyl-coenzyme A diphosphatase fit1 (250 aa).

Residues 1–23 are Cytoplasmic-facing; that stretch reads MTEKTASHYWNEETSILKLRRKD. A helical membrane pass occupies residues 24-44; that stretch reads ILLFEIYATTLLLGSIYSIYV. Over 45–58 the chain is Lumenal; the sequence is DKWSITSYFGNSKN. A helical membrane pass occupies residues 59 to 79; it reads LINLIFVKRGWFWTSLVYFYH. The Cytoplasmic segment spans residues 80–95; that stretch reads AWDQKRNKIDFKFISR. The helical transmembrane segment at 96 to 116 threads the bilayer; the sequence is YIVATLWWMFVTQWFIGPGLI. The Lumenal portion of the chain corresponds to 117–160; the sequence is DRTFALSGGSCKNFDGDSSVFIPLTASTCKGLNGSWSGGHDLSG. N-linked (GlcNAc...) asparagine glycosylation is present at N149. H161 is an active-site residue. Residues 161–181 traverse the membrane as a helical segment; the sequence is HVFLLTHSSLFMLSENFSFIL. Residues 182–191 are Cytoplasmic-facing; the sequence is NNGIKATSTK. A helical membrane pass occupies residues 192–212; that stretch reads VLFGLLGLWWWMLFVTASFYH. Residue H212 is part of the active site. A topological domain (lumenal) is located at residue T213. The chain crosses the membrane as a helical span at residues 214 to 234; sequence TFEKCTGFFSGILEWSIVYVF. Residues 235 to 250 lie on the Cytoplasmic side of the membrane; it reads SSRMPAVADLLGSSDY.

This sequence belongs to the FIT family. Fungal FIT2B/SCS3 subfamily.

It is found in the endoplasmic reticulum membrane. The catalysed reaction is an acyl-CoA + H2O = an acyl-4'-phosphopantetheine + adenosine 3',5'-bisphosphate + 2 H(+). It carries out the reaction (9Z)-octadecenoyl-CoA + H2O = S-(9Z-octadecenoyl)-4'-phosphopantetheine + adenosine 3',5'-bisphosphate + 2 H(+). It catalyses the reaction (5Z,8Z,11Z,14Z)-eicosatetraenoyl-CoA + H2O = S-(5Z,8Z,11Z,14Z-eicosatetraenoyl)-4'-phosphopantetheine + adenosine 3',5'-bisphosphate + 2 H(+). The enzyme catalyses hexadecanoyl-CoA + H2O = S-hexadecanoyl-4'-phosphopantetheine + adenosine 3',5'-bisphosphate + 2 H(+). Fatty acyl-coenzyme A (CoA) diphosphatase that hydrolyzes fatty acyl-CoA to yield acyl-4'-phosphopantetheine and adenosine 3',5'-bisphosphate. Preferentially hydrolyzes unsaturated long-chain acyl-CoA substrates in the endoplasmic reticulum (ER) lumen. This catalytic activity is required for maintaining ER structure and for lipid droplets (LDs) biogenesis, which are lipid storage organelles involved in maintaining lipid and energy homeostasis. May directly bind to diacylglycerol (DAGs) and triacylglycerol, which is also important for LD biogenesis. May support directional budding of nacent LDs from the ER into the cytosol by reducing DAG levels at sites of LD formation. May play a role in the regulation of cell morphology and cytoskeletal organization. This Schizosaccharomyces pombe (strain 972 / ATCC 24843) (Fission yeast) protein is Acyl-coenzyme A diphosphatase fit1.